The sequence spans 33 residues: Neutrophil defensin 4 (33 aa).

3 disulfide bridges follow: Cys3–Cys31, Cys5–Cys20, and Cys10–Cys30.

It belongs to the alpha-defensin family. In terms of processing, HANP-2 could be a product of proteolytic N-terminal amino acid removal from HANP-4.

Its subcellular location is the secreted. Its function is as follows. Bactericidal activity, greater against Gram-positive bacteria. Low anti-fungi activity. The sequence is that of Neutrophil defensin 4 from Mesocricetus auratus (Golden hamster).